We begin with the raw amino-acid sequence, 365 residues long: Peptide chain release factor 2 (365 aa).

Gln-251 is subject to N5-methylglutamine.

Belongs to the prokaryotic/mitochondrial release factor family. In terms of processing, methylated by PrmC. Methylation increases the termination efficiency of RF2.

It is found in the cytoplasm. Its function is as follows. Peptide chain release factor 2 directs the termination of translation in response to the peptide chain termination codons UGA and UAA. This chain is Peptide chain release factor 2, found in Neorickettsia sennetsu (strain ATCC VR-367 / Miyayama) (Ehrlichia sennetsu).